The sequence spans 306 residues: Dihydroorotate dehydrogenase B (NAD(+)), catalytic subunit (306 aa).

FMN is bound by residues S24 and 48–49 (KA). Substrate-binding positions include K48 and 72 to 76 (NAIGL). FMN-binding residues include N102 and N130. A substrate-binding site is contributed by N130. The active-site Nucleophile is C133. FMN-binding residues include K168 and I194. A substrate-binding site is contributed by 195-196 (NT). Residues G220, 246–247 (GG), and 268–269 (GT) each bind FMN.

Belongs to the dihydroorotate dehydrogenase family. Type 1 subfamily. As to quaternary structure, heterotetramer of 2 PyrK and 2 PyrD type B subunits. The cofactor is FMN.

It localises to the cytoplasm. It catalyses the reaction (S)-dihydroorotate + NAD(+) = orotate + NADH + H(+). The protein operates within pyrimidine metabolism; UMP biosynthesis via de novo pathway; orotate from (S)-dihydroorotate (NAD(+) route): step 1/1. Its function is as follows. Catalyzes the conversion of dihydroorotate to orotate with NAD(+) as electron acceptor. In Malacoplasma penetrans (strain HF-2) (Mycoplasma penetrans), this protein is Dihydroorotate dehydrogenase B (NAD(+)), catalytic subunit (pyrD).